The sequence spans 115 residues: Large ribosomal subunit protein bL20 (115 aa).

The protein belongs to the bacterial ribosomal protein bL20 family.

In terms of biological role, binds directly to 23S ribosomal RNA and is necessary for the in vitro assembly process of the 50S ribosomal subunit. It is not involved in the protein synthesizing functions of that subunit. The chain is Large ribosomal subunit protein bL20 from Synechococcus sp. (strain RCC307).